The primary structure comprises 422 residues: G-protein coupled receptor 83 (422 aa).

Residues 1-17 (MNVPPVLLLFLLSSVRA) form the signal peptide. Residues 18-70 (TEQPQVVTEHPSMDAALTGANASHFWANYTFSDWQNFVGRRRYGAESQNPTVK) are Extracellular-facing. Residues 71-91 (ALLIVAYSFIIVFSLFGNVLV) form a helical membrane-spanning segment. Over 92–106 (CHVIFKNQRMHSATS) the chain is Cytoplasmic. A helical membrane pass occupies residues 107–127 (LFIVNLAVADIMITLLNTPFT). The Extracellular portion of the chain corresponds to 128-143 (LVRFVNSTWVFGKGMC). Cys-143 and Cys-223 are disulfide-bonded. The helical transmembrane segment at 144 to 166 (HVSRFAQYCSLHVSALTLTAIAV) threads the bilayer. The Cytoplasmic portion of the chain corresponds to 167–184 (DRHQVIMHPLKPRISITK). Residues 185–205 (GVIYIAVIWVMATFFSLPHAI) form a helical membrane-spanning segment. At 206-236 (CQKLFTFKYSEDIVRSLCLPDFPEPADLFWK) the chain is on the extracellular side. Residues 237-257 (YLDLATFILLYLLPLFIISVA) form a helical membrane-spanning segment. Topologically, residues 258–292 (YARVAKKLWLCNTIGDVTTEQYLALRRKKKTTVKM) are cytoplasmic. The chain crosses the membrane as a helical span at residues 293 to 313 (LVLVVVLFALCWFPLNCYVLL). Residues 314 to 326 (LSSKAIHTNNALY) lie on the Extracellular side of the membrane. A helical membrane pass occupies residues 327–347 (FAFHWFAMSSTCYNPFIYCWL). Residues 348 to 422 (NENFRVELKA…SSVEPTVAVS (75 aa)) lie on the Cytoplasmic side of the membrane. Residues 401-422 (PSSQIQSGKTDLSSVEPTVAVS) form a disordered region.

The protein belongs to the G-protein coupled receptor 1 family. In terms of tissue distribution, expressed preferentially in brain, and its neuronal expression is relegated to limbic brain regions, particularly in forebrain.

It localises to the cell membrane. Its function is as follows. G-protein coupled receptor for PEN, a neuropeptide produced from the precursor protein, proSAAS (encoded by PCSK1N). Acts through a G(i)- and G(q)-alpha-alpha-mediated pathway in response to PEN. Plays a role in food intake and body weight regulation. May contribute to the regulation of anxiety-related behaviors. The protein is G-protein coupled receptor 83 of Rattus norvegicus (Rat).